The sequence spans 160 residues: S-ribosylhomocysteine lyase (160 aa).

Positions 57, 61, and 127 each coordinate Fe cation.

The protein belongs to the LuxS family. As to quaternary structure, homodimer. It depends on Fe cation as a cofactor.

It catalyses the reaction S-(5-deoxy-D-ribos-5-yl)-L-homocysteine = (S)-4,5-dihydroxypentane-2,3-dione + L-homocysteine. Involved in the synthesis of autoinducer 2 (AI-2) which is secreted by bacteria and is used to communicate both the cell density and the metabolic potential of the environment. The regulation of gene expression in response to changes in cell density is called quorum sensing. Catalyzes the transformation of S-ribosylhomocysteine (RHC) to homocysteine (HC) and 4,5-dihydroxy-2,3-pentadione (DPD). The chain is S-ribosylhomocysteine lyase from Streptococcus pneumoniae (strain CGSP14).